The following is a 382-amino-acid chain: uncharacterized protein (382 aa).

A run of 11 helical transmembrane segments spans residues 8-28, 41-61, 73-93, 94-114, 133-153, 157-177, 208-228, 235-255, 274-294, 325-345, and 349-369; these read VLLLLCGLLLFTISIAVLNTL, WQVGMVSSSYFTGNLVGTLIA, SYHCSCILFALATCGLMLTVD, FWSWLGWRFLAGIACALIWVI, AAYMMVYYLGTVIGQLLLGIV, LLSVIPWVGALVITAMLPLLF, GCIISGVLLGSLYGLLPLYLS, ASVGGWMALLVSSGIIGQWPM, VVILGSVAILGNYAMAPALFI, ALLMSYTLGSLAGPTMTSLLM, and SDNLLFIMIAGVAFVYLMMLL.

Belongs to the major facilitator superfamily. YcaD (TC 2.A.1.26) family.

The protein resides in the cell inner membrane. This is an uncharacterized protein from Yersinia pseudotuberculosis serotype IB (strain PB1/+).